The chain runs to 352 residues: Guanidino acid hydrolase, mitochondrial (352 aa).

The N-terminal 35 residues, 1–35 (MLRLLASGCARGPGPGVGARPAAGLFHPGRRQSRQ), are a transit peptide targeting the mitochondrion. Residues 11–49 (RGPGPGVGARPAAGLFHPGRRQSRQASDAPRNQPPSPEF) form a disordered region. Residues H162, D185, H187, and D189 each contribute to the Mn(2+) site. N6-acetyllysine is present on K193. An N6-acetyllysine; alternate modification is found at K217. K217 is modified (N6-succinyllysine; alternate). Mn(2+) contacts are provided by D276 and D278.

This sequence belongs to the ureohydrolase superfamily. Arginase family. The cofactor is Mn(2+). Highly expressed in liver and kidney. Also found in skeletal muscle, fetal liver, brain, testis, skin and the gastrointestinal tract. Within brain, expression is higher in the cerebral cortex with lower levels in the medulla and spinal cord.

The protein resides in the mitochondrion. The catalysed reaction is 3-guanidinopropanoate + H2O = urea + beta-alanine. It catalyses the reaction 4-guanidinobutanoate + H2O = urea + 4-aminobutanoate. The enzyme catalyses taurocyamine + H2O = urea + taurine. It carries out the reaction L-arginine + H2O = urea + L-ornithine. The protein operates within nitrogen metabolism; urea cycle; L-ornithine and urea from L-arginine: step 1/1. In terms of biological role, hydrolyzes linear guanidino acids to form urea and the corresponding amines. Displays specificity for substrates having a negatively charged head group and short chains including taurocyamine, guanidino propanoic and butanoic acids. May protect cells by detoxifying potentially harmful amounts of guanidino acids. Metabolizes L-arginine with low efficiency. This chain is Guanidino acid hydrolase, mitochondrial (AGMAT), found in Homo sapiens (Human).